The sequence spans 139 residues: Thioredoxin-like protein Clot (139 aa).

Residues 1 to 136 form the Thioredoxin domain; it reads MTVEKVDATV…LADKVDAVVN (136 aa). Catalysis depends on nucleophile residues Cys-49 and Cys-52. A disulfide bridge links Cys-49 with Cys-52.

Belongs to the thioredoxin family.

In terms of biological role, probable thiol-disulfide oxidoreductase that may participate in various redox reactions. In Oryza sativa subsp. japonica (Rice), this protein is Thioredoxin-like protein Clot.